The chain runs to 428 residues: MTMLDTTSTVAVSLYALLSTAYKSMQAVYSLPTDVSLASHGLGGFDELPSVDVIVPSFNEDPRTLSECLASIAGQEYGGRLQVYLVDDGSENREALRLVHEAFARDPRFNILLLPQNVGKRKAQDRCDQRSAGDMVLNVDSDTILASDVIRKLVPKNARVAVGRMGQLTGPQPKRQLADPFDDMEYWLACNEERSQQARFGCVMFCSGSCVMYRLVSASLLDQYDAQYFRKQRFGEIDIHLSHAEGSFRTEYRPSAHAATVVPNKLGPYLGQQLRWARSTFRTTLLGAPLPNLNRFLMLDVVGQNLGPLLLDHSVLTGLAQLALTGTAPWLAALMIVAMTIDRCSVVALRARQLRFLGFSLHTFINIFLLLPLKAYALCTLSNIAWLSSLLCWQLESTSTADARTTECSDMRTASKLSPPPSCQANDV.

This sequence belongs to the NodC/HAS family.

It localises to the cell membrane. Functionally, involved in the synthesis of Nod factor, a sulfated N-acyl-beta-1,4-tetrasaccharide of N-acetylglucosamine which initiates a series of events in the host plant species leading eventually to nodulation. The protein is N-acetylglucosaminyltransferase (nodC) of Rhizobium leguminosarum bv. phaseoli.